The following is a 205-amino-acid chain: Endoribonuclease YbeY (205 aa).

Histidine 124, histidine 128, and histidine 134 together coordinate Zn(2+). The segment at 162-205 is disordered; it reads GTAPVAPGGEAQVPNEALETSGKRQDHSLGEILPGGMSRRLAGS.

Belongs to the endoribonuclease YbeY family. The cofactor is Zn(2+).

It is found in the cytoplasm. Single strand-specific metallo-endoribonuclease involved in late-stage 70S ribosome quality control and in maturation of the 3' terminus of the 16S rRNA. The chain is Endoribonuclease YbeY from Beijerinckia indica subsp. indica (strain ATCC 9039 / DSM 1715 / NCIMB 8712).